A 141-amino-acid polypeptide reads, in one-letter code: MTLEQTLAIIKPDAVERNLIGNIISRLEDKGFQIIAMKMLHLNQEQAEGFYTEHSDKAFFAELIRYMTSAPIVVLVLQKENAVKDYRTFMGTTNPEIAENGTLRYEFAINQTQNSVHGSDSLENAQREIAYFFAEAEIYAR.

ATP-binding residues include lysine 11, phenylalanine 59, arginine 87, threonine 93, arginine 104, and asparagine 114. The active-site Pros-phosphohistidine intermediate is the histidine 117.

It belongs to the NDK family. Homotetramer. Requires Mg(2+) as cofactor.

The protein localises to the cytoplasm. It catalyses the reaction a 2'-deoxyribonucleoside 5'-diphosphate + ATP = a 2'-deoxyribonucleoside 5'-triphosphate + ADP. The catalysed reaction is a ribonucleoside 5'-diphosphate + ATP = a ribonucleoside 5'-triphosphate + ADP. Major role in the synthesis of nucleoside triphosphates other than ATP. The ATP gamma phosphate is transferred to the NDP beta phosphate via a ping-pong mechanism, using a phosphorylated active-site intermediate. The sequence is that of Nucleoside diphosphate kinase from Histophilus somni (strain 129Pt) (Haemophilus somnus).